We begin with the raw amino-acid sequence, 115 residues long: Large ribosomal subunit protein bL19 (115 aa).

This sequence belongs to the bacterial ribosomal protein bL19 family.

Its function is as follows. This protein is located at the 30S-50S ribosomal subunit interface and may play a role in the structure and function of the aminoacyl-tRNA binding site. The protein is Large ribosomal subunit protein bL19 of Streptococcus equi subsp. equi (strain 4047).